We begin with the raw amino-acid sequence, 311 residues long: Ornithine carbamoyltransferase (311 aa).

Residues Gln85, Arg109, and 136-139 (HPCQ) contribute to the carbamoyl phosphate site. L-ornithine-binding positions include Asn167, Asp231, and 235-236 (SM). Carbamoyl phosphate is bound by residues 271–272 (CL) and Arg299.

The protein belongs to the aspartate/ornithine carbamoyltransferase superfamily. OTCase family.

The protein localises to the cytoplasm. It catalyses the reaction carbamoyl phosphate + L-ornithine = L-citrulline + phosphate + H(+). Its pathway is amino-acid biosynthesis; L-arginine biosynthesis; L-arginine from L-ornithine and carbamoyl phosphate: step 1/3. Its function is as follows. Reversibly catalyzes the transfer of the carbamoyl group from carbamoyl phosphate (CP) to the N(epsilon) atom of ornithine (ORN) to produce L-citrulline. This chain is Ornithine carbamoyltransferase (argF), found in Geobacillus stearothermophilus (Bacillus stearothermophilus).